The sequence spans 314 residues: Glyceraldehyde-3-phosphate dehydrogenase A, chloroplastic (314 aa).

NADP(+) contacts are provided by residues 5–6, Asp29, and Arg74; that span reads RI. A disulfide bridge connects residues Cys13 and Cys283. D-glyceraldehyde 3-phosphate is bound by residues 147–149, Thr178, Arg193, 206–207, and Arg229; these read SCT and TG. The Nucleophile role is filled by Cys148. Asn311 is an NADP(+) binding site.

This sequence belongs to the glyceraldehyde-3-phosphate dehydrogenase family. In terms of assembly, homotetramer.

Its subcellular location is the plastid. The protein resides in the chloroplast. It carries out the reaction D-glyceraldehyde 3-phosphate + phosphate + NADP(+) = (2R)-3-phospho-glyceroyl phosphate + NADPH + H(+). It functions in the pathway carbohydrate biosynthesis; Calvin cycle. The protein is Glyceraldehyde-3-phosphate dehydrogenase A, chloroplastic (GapA) of Scenedesmus vacuolatus (Green alga).